The sequence spans 605 residues: Ankyrin repeat domain-containing protein 13D (605 aa).

UIM domains lie at 482–501 (EDDDLLQFAIQQSLLEAGTE) and 528–547 (EEQLQLEQALQESLQLSTES). Residues 538–554 (QESLQLSTESRGPESPQ) show a composition bias toward low complexity. The interval 538–605 (QESLQLSTES…RILQLSLTEH (68 aa)) is disordered. Phosphoserine is present on Ser552. Thr556 carries the post-translational modification Phosphothreonine. Over residues 564–575 (SFEEQLRLALEL) the composition is skewed to low complexity. 2 UIM domains span residues 564-583 (SFEEQLRLALELSSREQEEL) and 589-605 (QEEDDLQRILQLSLTEH). Over residues 576 to 589 (SSREQEELERRGQQ) the composition is skewed to basic and acidic residues.

As to quaternary structure, interacts with EGFR (ubiquitinated); the interaction is direct and may regulate EGFR internalization.

It localises to the cell membrane. The protein resides in the late endosome. Functionally, ubiquitin-binding protein that specifically recognizes and binds 'Lys-63'-linked ubiquitin. Does not bind 'Lys-48'-linked ubiquitin. Positively regulates the internalization of ligand-activated EGFR by binding to the Ub moiety of ubiquitinated EGFR at the cell membrane. The sequence is that of Ankyrin repeat domain-containing protein 13D (Ankrd13d) from Mus musculus (Mouse).